The primary structure comprises 202 residues: NAD(P)H dehydrogenase (quinone) (202 aa).

One can recognise a Flavodoxin-like domain in the interval 7 to 193 (VLVLYYSMYG…TIARFQGRHF (187 aa)). Residues 13 to 18 (SMYGHI) and 82 to 84 (TRF) each bind FMN. Y15 provides a ligand contact to NAD(+). W102 contributes to the substrate binding site. FMN-binding positions include 117-122 (STATGG) and H137.

Belongs to the WrbA family. It depends on FMN as a cofactor.

The enzyme catalyses a quinone + NADH + H(+) = a quinol + NAD(+). It catalyses the reaction a quinone + NADPH + H(+) = a quinol + NADP(+). The polypeptide is NAD(P)H dehydrogenase (quinone) (Rhodospirillum rubrum (strain ATCC 11170 / ATH 1.1.1 / DSM 467 / LMG 4362 / NCIMB 8255 / S1)).